The chain runs to 198 residues: Ribonuclease HII (198 aa).

In terms of domain architecture, RNase H type-2 spans 10–198 (QLVAGVDEVG…PVKRALGLAS (189 aa)). A divalent metal cation is bound by residues D16, E17, and D108.

The protein belongs to the RNase HII family. The cofactor is Mn(2+). Mg(2+) serves as cofactor.

Its subcellular location is the cytoplasm. The catalysed reaction is Endonucleolytic cleavage to 5'-phosphomonoester.. Endonuclease that specifically degrades the RNA of RNA-DNA hybrids. The sequence is that of Ribonuclease HII from Citrobacter koseri (strain ATCC BAA-895 / CDC 4225-83 / SGSC4696).